The primary structure comprises 893 residues: UPF0182 protein CLD_0809 (893 aa).

7 consecutive transmembrane segments (helical) span residues 9–29 (IPLFIIILFIAFFNKIINFII), 49–69 (AIIILMIPIFIIFFISIWMYY), 94–114 (LFFIFNFIVSIFLAYIFSSSY), 154–174 (VIISLLLFLVITTFIAYFILE), 202–222 (LAIVSGLIILFISFGHLIKIW), 246–266 (FYKIIVVITLISSIVTLLSIV), and 273–293 (VSICIGITIFLIVSQNIASFL).

Belongs to the UPF0182 family.

The protein localises to the cell membrane. The sequence is that of UPF0182 protein CLD_0809 from Clostridium botulinum (strain Okra / Type B1).